Reading from the N-terminus, the 113-residue chain is Probable 4-amino-4-deoxy-L-arabinose-phosphoundecaprenol flippase subunit ArnE (113 aa).

Transmembrane regions (helical) follow at residues 37–57 (SALKWLIGAVILLAVGMLFWL), 62–82 (ILPLGIAYPMLSINFIMVTLA), and 91–111 (AGIKHWSGVVFIMLGILLMSL). The 67-residue stretch at 45–111 (AVILLAVGML…IMLGILLMSL (67 aa)) folds into the EamA domain.

The protein belongs to the ArnE family. Heterodimer of ArnE and ArnF.

It localises to the cell inner membrane. It functions in the pathway bacterial outer membrane biogenesis; lipopolysaccharide biosynthesis. Its function is as follows. Translocates 4-amino-4-deoxy-L-arabinose-phosphoundecaprenol (alpha-L-Ara4N-phosphoundecaprenol) from the cytoplasmic to the periplasmic side of the inner membrane. In Photorhabdus laumondii subsp. laumondii (strain DSM 15139 / CIP 105565 / TT01) (Photorhabdus luminescens subsp. laumondii), this protein is Probable 4-amino-4-deoxy-L-arabinose-phosphoundecaprenol flippase subunit ArnE.